The following is a 219-amino-acid chain: Uracil-DNA glycosylase (219 aa).

Asp-61 (proton acceptor) is an active-site residue.

The protein belongs to the uracil-DNA glycosylase (UDG) superfamily. UNG family.

The protein resides in the cytoplasm. It carries out the reaction Hydrolyzes single-stranded DNA or mismatched double-stranded DNA and polynucleotides, releasing free uracil.. Functionally, excises uracil residues from the DNA which can arise as a result of misincorporation of dUMP residues by DNA polymerase or due to deamination of cytosine. The protein is Uracil-DNA glycosylase of Haemophilus influenzae (strain 86-028NP).